The chain runs to 374 residues: Tuliposide A-converting enzyme b3, amyloplastic (374 aa).

Residues 1-68 constitute an amyloplast transit peptide; the sequence is MSAALFCGPP…TNSSLSPSPT (68 aa). The active-site Acyl-ester intermediate is serine 226. Catalysis depends on charge relay system residues aspartate 316 and histidine 348.

This sequence belongs to the AB hydrolase superfamily. In terms of assembly, homodimer. As to expression, highly expressed in pistil and bulb scales. Lower expression in stem, and barely detected in root, leaf, petal and stamen.

It localises to the plastid. Its subcellular location is the amyloplast. The enzyme catalyses 6-tuliposide A = tulipalin A + D-glucose. Functionally, lactone-forming carboxylesterases, specifically catalyzing intramolecular transesterification, but not hydrolysis. Involved in the biosynthesis of tulipalins, defensive chemicals that show antimicrobial activities against a broad range of strains of bacteria and fungi. Substrates are 6-tuliposide A &gt; 6-tuliposide B. This chain is Tuliposide A-converting enzyme b3, amyloplastic (TCEA-B3), found in Tulipa gesneriana (Garden tulip).